Reading from the N-terminus, the 1102-residue chain is Centrosomal protein of 128 kDa (1102 aa).

A phosphoserine mark is found at S31, S248, and S290. Coiled coils occupy residues 215–822 and 878–959; these read VSDR…LETE and EELK…ALQM. The segment at 326–346 is disordered; the sequence is QHQVPCISKQPLSHQDDQGDD. 2 disordered regions span residues 991-1048 and 1070-1102; these read SEKT…DHSR and DPAS…KYKK. The span at 1009–1027 shows a compositional bias: basic and acidic residues; the sequence is QQRRDDTKPRIKSFRDDRP. Polar residues-rich tracts occupy residues 1039–1048 and 1076–1089; these read HSSSCQDHSR and GDTT…TSPQ. Residues 1090–1102 are compositionally biased toward basic and acidic residues; that stretch reads SKKEEHEIKKYKK.

It localises to the cytoplasm. The protein resides in the cytoskeleton. The protein localises to the microtubule organizing center. It is found in the centrosome. Its subcellular location is the centriole. It localises to the spindle pole. The chain is Centrosomal protein of 128 kDa (Cep128) from Mus musculus (Mouse).